The sequence spans 503 residues: Glutamate--tRNA ligase (503 aa).

The 'HIGH' region signature appears at 14-24; that stretch reads PSPTGSLHIGG. The 'KMSKS' region signature appears at 261-265; it reads KLSKR. K264 contacts ATP.

Belongs to the class-I aminoacyl-tRNA synthetase family. Glutamate--tRNA ligase type 1 subfamily. In terms of assembly, monomer.

The protein resides in the cytoplasm. It carries out the reaction tRNA(Glu) + L-glutamate + ATP = L-glutamyl-tRNA(Glu) + AMP + diphosphate. In terms of biological role, catalyzes the attachment of glutamate to tRNA(Glu) in a two-step reaction: glutamate is first activated by ATP to form Glu-AMP and then transferred to the acceptor end of tRNA(Glu). The protein is Glutamate--tRNA ligase of Chloroflexus aurantiacus (strain ATCC 29366 / DSM 635 / J-10-fl).